The primary structure comprises 199 residues: Recombination protein RecR (199 aa).

The C4-type zinc finger occupies 57-72 (CERCNNLSEAPLCAVC). Positions 80–174 (SILCVVESPA…TISRIARGVP (95 aa)) constitute a Toprim domain.

Belongs to the RecR family.

Its function is as follows. May play a role in DNA repair. It seems to be involved in an RecBC-independent recombinational process of DNA repair. It may act with RecF and RecO. The sequence is that of Recombination protein RecR from Acidithiobacillus ferrooxidans (strain ATCC 23270 / DSM 14882 / CIP 104768 / NCIMB 8455) (Ferrobacillus ferrooxidans (strain ATCC 23270)).